Reading from the N-terminus, the 336-residue chain is DNA-directed RNA polymerase subunit alpha (336 aa).

An alpha N-terminal domain (alpha-NTD) region spans residues 1–235; it reads MIEFVIPKKL…HFKIVTEGLP (235 aa). The alpha C-terminal domain (alpha-CTD) stretch occupies residues 264-336; that stretch reads RENSDVYNRK…KFGLELRKGE (73 aa).

Belongs to the RNA polymerase alpha chain family. Homodimer. The RNAP catalytic core consists of 2 alpha, 1 beta, 1 beta' and 1 omega subunit. When a sigma factor is associated with the core the holoenzyme is formed, which can initiate transcription.

The enzyme catalyses RNA(n) + a ribonucleoside 5'-triphosphate = RNA(n+1) + diphosphate. In terms of biological role, DNA-dependent RNA polymerase catalyzes the transcription of DNA into RNA using the four ribonucleoside triphosphates as substrates. The protein is DNA-directed RNA polymerase subunit alpha of Thermotoga maritima (strain ATCC 43589 / DSM 3109 / JCM 10099 / NBRC 100826 / MSB8).